A 222-amino-acid polypeptide reads, in one-letter code: Cytochrome b6 (222 aa).

Residues 39 to 59 (IFYCLGGITLTCFLIQFATGF) traverse the membrane as a helical segment. C42 is a binding site for heme c. Heme b-binding residues include H93 and H107. 3 helical membrane passes run 97 to 117 (ASMMVLMMILHVFRVYLTGGF), 123 to 143 (LTWVTGVVLAVITVSFGVTGY), and 193 to 213 (LHTFVLPWLIAVFMLLHFLMI). Heme b contacts are provided by H194 and H209.

It belongs to the cytochrome b family. PetB subfamily. As to quaternary structure, the 4 large subunits of the cytochrome b6-f complex are cytochrome b6, subunit IV (17 kDa polypeptide, PetD), cytochrome f and the Rieske protein, while the 4 small subunits are PetG, PetL, PetM and PetN. The complex functions as a dimer. It depends on heme b as a cofactor. Heme c is required as a cofactor.

It localises to the cellular thylakoid membrane. Component of the cytochrome b6-f complex, which mediates electron transfer between photosystem II (PSII) and photosystem I (PSI), cyclic electron flow around PSI, and state transitions. This is Cytochrome b6 from Cyanothece sp. (strain PCC 7425 / ATCC 29141).